The primary structure comprises 519 residues: Histidine ammonia-lyase (519 aa).

The segment at residues 146–148 (ASG) is a cross-link (5-imidazolinone (Ala-Gly)). Ser-147 carries the 2,3-didehydroalanine (Ser) modification.

The protein belongs to the PAL/histidase family. Post-translationally, contains an active site 4-methylidene-imidazol-5-one (MIO), which is formed autocatalytically by cyclization and dehydration of residues Ala-Ser-Gly.

It is found in the cytoplasm. The enzyme catalyses L-histidine = trans-urocanate + NH4(+). Its pathway is amino-acid degradation; L-histidine degradation into L-glutamate; N-formimidoyl-L-glutamate from L-histidine: step 1/3. The chain is Histidine ammonia-lyase from Psychrobacter sp. (strain PRwf-1).